The primary structure comprises 174 residues: Peptide deformylase (174 aa).

Fe cation is bound by residues Cys91 and His133. Glu134 is an active-site residue. Fe cation is bound at residue His137.

It belongs to the polypeptide deformylase family. Fe(2+) serves as cofactor.

The enzyme catalyses N-terminal N-formyl-L-methionyl-[peptide] + H2O = N-terminal L-methionyl-[peptide] + formate. Removes the formyl group from the N-terminal Met of newly synthesized proteins. Requires at least a dipeptide for an efficient rate of reaction. N-terminal L-methionine is a prerequisite for activity but the enzyme has broad specificity at other positions. This Fusobacterium nucleatum subsp. nucleatum (strain ATCC 25586 / DSM 15643 / BCRC 10681 / CIP 101130 / JCM 8532 / KCTC 2640 / LMG 13131 / VPI 4355) protein is Peptide deformylase.